Reading from the N-terminus, the 350-residue chain is Uroporphyrinogen decarboxylase (350 aa).

Substrate contacts are provided by residues Arg-27 to Arg-31, Phe-46, Asp-76, Tyr-152, Ser-207, and His-321.

This sequence belongs to the uroporphyrinogen decarboxylase family. As to quaternary structure, homodimer.

The protein resides in the cytoplasm. It carries out the reaction uroporphyrinogen III + 4 H(+) = coproporphyrinogen III + 4 CO2. It functions in the pathway porphyrin-containing compound metabolism; protoporphyrin-IX biosynthesis; coproporphyrinogen-III from 5-aminolevulinate: step 4/4. In terms of biological role, catalyzes the decarboxylation of four acetate groups of uroporphyrinogen-III to yield coproporphyrinogen-III. In Listeria monocytogenes serotype 4a (strain HCC23), this protein is Uroporphyrinogen decarboxylase.